A 72-amino-acid chain; its full sequence is uncharacterized protein (72 aa).

A helical transmembrane segment spans residues 33–53; sequence VCIFFSLIFFFFFFFFCVNWG.

Its subcellular location is the membrane. This is an uncharacterized protein from Dictyostelium discoideum (Social amoeba).